The following is a 317-amino-acid chain: Melanocyte-stimulating hormone receptor (317 aa).

The Extracellular segment spans residues 1–37 (MAVQGSQRRLLGSLNSTPTAIPQLGLAANQTGARCLE). N-linked (GlcNAc...) asparagine glycosylation is present at Asn-29. A helical membrane pass occupies residues 38 to 63 (VSIPDGLFLSLGLVSLVENMLVVATI). Residues 64-72 (AKNRNLHSP) lie on the Cytoplasmic side of the membrane. The chain crosses the membrane as a helical span at residues 73–93 (MYCFICCLALSDLLVSGSNVL). The Extracellular segment spans residues 94 to 118 (ETAVILLLEAGALVARAAVLQQVDN). A helical transmembrane segment spans residues 119-140 (VIDVITCSSMLSSLCFLGAIAV). At 141–163 (DRYISIFYALRYHSIVTLPRARR) the chain is on the cytoplasmic side. The chain crosses the membrane as a helical span at residues 164–183 (AIAAIWVASVLFSTLFIAYC). Residues 184–191 (DHTAVLLC) are Extracellular-facing. The chain crosses the membrane as a helical span at residues 192–211 (LVVFFLAVLVLMAVLYVHML). At 212–240 (ARACQHAQGIARLHKRQRPVHQGFGLKGA) the chain is on the cytoplasmic side. A helical transmembrane segment spans residues 241–266 (VTLTILLGIFFLCWGPFFLHLTLIVL). The Extracellular portion of the chain corresponds to 267 to 279 (CPEHPTCGCIFKN). A helical transmembrane segment spans residues 280–300 (FNLFLALIICNAIIDPLIYAF). Topologically, residues 301 to 317 (HSQELRRTLKEVLTCSW) are cytoplasmic. A lipid anchor (S-palmitoyl cysteine) is attached at Cys-315.

The protein belongs to the G-protein coupled receptor 1 family. In terms of assembly, interacts with MGRN1, but does not undergo MGRN1-mediated ubiquitination; this interaction competes with GNAS-binding and thus inhibits agonist-induced cAMP production. Interacts with OPN3; the interaction results in a decrease in MC1R-mediated cAMP signaling and ultimately a decrease in melanin production in melanocytes.

It localises to the cell membrane. Its function is as follows. Receptor for MSH (alpha, beta and gamma) and ACTH. The activity of this receptor is mediated by G proteins which activate adenylate cyclase. Mediates melanogenesis, the production of eumelanin (black/brown) and phaeomelanin (red/yellow), via regulation of cAMP signaling in melanocytes. This chain is Melanocyte-stimulating hormone receptor (MC1R), found in Pan troglodytes (Chimpanzee).